The chain runs to 358 residues: WD repeat-containing protein 53 (358 aa).

WD repeat units follow at residues 1-38, 43-80, 85-123, 127-166, 173-225, and 232-270; these read MAVK…AWGE, LGHT…VLDV, DSLD…ILDL, KVIR…LWSL, WITN…RIFR, and EQEL…LWDA. The interval 273–311 is disordered; it reads EVEKKQKSPTKRTHRKKPKRGTCTKQGGNTNASVTDEEE. Residues 279-294 show a composition bias toward basic residues; that stretch reads KSPTKRTHRKKPKRGT. Residues 295 to 306 are compositionally biased toward polar residues; sequence CTKQGGNTNASV. The WD 7 repeat unit spans residues 314–355; the sequence is NILPKLNIEHGEKVNWLLGTKIKGHQNILVADQTSCISVYPL.

The protein belongs to the WD repeat WDR53 family.

This Homo sapiens (Human) protein is WD repeat-containing protein 53 (WDR53).